A 343-amino-acid polypeptide reads, in one-letter code: Dimethyladenosine transferase 1, mitochondrial (343 aa).

S-adenosyl-L-methionine contacts are provided by residues 28 to 31 (QNFL), Asn-29, Leu-31, Gly-56, Glu-78, Asp-133, and Asn-169.

Belongs to the class I-like SAM-binding methyltransferase superfamily. rRNA adenine N(6)-methyltransferase family. KsgA subfamily.

The protein resides in the mitochondrion. Probable S-adenosyl-L-methionine-dependent methyltransferase which specifically dimethylates mitochondrial 12S rRNA at the conserved stem loop. Also required for basal transcription of mitochondrial DNA. Stimulates transcription independently of the methyltransferase activity. The sequence is that of Dimethyladenosine transferase 1, mitochondrial from Vermamoeba vermiformis (Amoeba).